The following is a 27-amino-acid chain: Protamine-B (27 aa).

The interval 1–27 (ARRRRRSSRPQRRRRRRRHGRRRRGRR) is disordered.

As to expression, testis.

The protein resides in the nucleus. The protein localises to the chromosome. Its function is as follows. Protamines substitute for histones in the chromatin of sperm during the haploid phase of spermatogenesis. They compact sperm DNA into a highly condensed, stable and inactive complex. In Acipenser stellatus (Sevruga), this protein is Protamine-B.